The chain runs to 196 residues: Holliday junction branch migration complex subunit RuvA (196 aa).

Positions 1–63 are domain I; sequence MYDYIKGTLV…DDAHLLFGFH (63 aa). Positions 64–142 are domain II; the sequence is TEDEKEVFLK…ELPAETTNTT (79 aa). A flexible linker region spans residues 143-146; sequence ANQT. A domain III region spans residues 147–196; it reads AGNQQLDEAMEALLALGYKSTELKKVKAFFEDTNETAEQYIKSALKMLMK.

The protein belongs to the RuvA family. In terms of assembly, homotetramer. Forms an RuvA(8)-RuvB(12)-Holliday junction (HJ) complex. HJ DNA is sandwiched between 2 RuvA tetramers; dsDNA enters through RuvA and exits via RuvB. An RuvB hexamer assembles on each DNA strand where it exits the tetramer. Each RuvB hexamer is contacted by two RuvA subunits (via domain III) on 2 adjacent RuvB subunits; this complex drives branch migration. In the full resolvosome a probable DNA-RuvA(4)-RuvB(12)-RuvC(2) complex forms which resolves the HJ.

It localises to the cytoplasm. Functionally, the RuvA-RuvB-RuvC complex processes Holliday junction (HJ) DNA during genetic recombination and DNA repair, while the RuvA-RuvB complex plays an important role in the rescue of blocked DNA replication forks via replication fork reversal (RFR). RuvA specifically binds to HJ cruciform DNA, conferring on it an open structure. The RuvB hexamer acts as an ATP-dependent pump, pulling dsDNA into and through the RuvAB complex. HJ branch migration allows RuvC to scan DNA until it finds its consensus sequence, where it cleaves and resolves the cruciform DNA. This is Holliday junction branch migration complex subunit RuvA from Streptococcus thermophilus (strain CNRZ 1066).